Consider the following 140-residue polypeptide: Putative cell wall protein (140 aa).

The signal sequence occupies residues 1-21; it reads MASSLITSAVIVVVLSLVLGS. The segment covering 85 to 98 has biased composition (gly residues); the sequence is TGGGIPSYNGGQGA. The tract at residues 85–140 is disordered; sequence TGGGIPSYNGGQGAGPHTQLPGGDDTLVPNPGFEAPTPTIGAGTGSNGQVPPVPLP.

In terms of tissue distribution, inflorescence.

Its subcellular location is the secreted. It is found in the cell wall. The sequence is that of Putative cell wall protein from Arabidopsis thaliana (Mouse-ear cress).